A 963-amino-acid chain; its full sequence is Adhesion G protein-coupled receptor D2 (963 aa).

The Extracellular portion of the chain corresponds to 1–662 (MDAPWGAGER…EEESLLRTLS (662 aa)). The disordered stretch occupies residues 18-38 (DRSGVSLGPPPTPQVNQGTLG). In terms of domain architecture, Pentraxin (PTX) spans 116–325 (TTAVLVFDER…LPTVWVRLLC (210 aa)). A disulfide bridge links Cys146 with Cys212. Asn271 carries N-linked (GlcNAc...) asparagine glycosylation. In terms of domain architecture, GAIN-B spans 489-649 (MALVASVQRL…AILLQIYEVQ (161 aa)). Positions 599 to 649 (PLFPPHPPSPYTGGAWATTGCSVAALYLDSTACFCNHSTSFAILLQIYEVQ) are GPS. Cys619 and Cys633 are joined by a disulfide. Residue Asn634 is glycosylated (N-linked (GlcNAc...) asparagine). A helical transmembrane segment spans residues 663–683 (FVGCGVSFCALTTTFLLFLVA). The Cytoplasmic segment spans residues 684–691 (GVPKSERT). The chain crosses the membrane as a helical span at residues 692–712 (TVHKNLTFSLASAEGFLMTSE). At 713-720 (WAKANEVA) the chain is on the extracellular side. A helical membrane pass occupies residues 721 to 741 (CVAVTVAMHFLFLVAFSWMLV). At 742 to 762 (EGLLLWRKVVAVSMHPGPGMR) the chain is on the cytoplasmic side. Residues 763 to 783 (LYHATGWGVPVGIVAVTLAML) traverse the membrane as a helical segment. Over 784 to 800 (PHDYVAPGHCWLNVHTN) the chain is Extracellular. Residues 801–821 (AIWAFVGPVLFVLTANTCILA) traverse the membrane as a helical segment. Residues 822–857 (RVVMITVSSARRRARMLSPQPCLQQQIWTQIWATVK) are Cytoplasmic-facing. A helical transmembrane segment spans residues 858–878 (PVLVLLPVLGLTWLAGILVHL). At 879–880 (SP) the chain is on the extracellular side. A helical membrane pass occupies residues 881-901 (AWAYAAVGLNSIQGLYIFLVY). Residues 902-963 (AACNEEVRSA…TPRHPLKAPA (62 aa)) lie on the Cytoplasmic side of the membrane.

It belongs to the G-protein coupled receptor 2 family. Adhesion G-protein coupled receptor (ADGR) subfamily.

The protein localises to the membrane. Orphan receptor. This is Adhesion G protein-coupled receptor D2 (ADGRD2) from Homo sapiens (Human).